The primary structure comprises 382 residues: D-galactonate dehydratase (382 aa).

D183 is a binding site for Mg(2+). H185 acts as the Proton donor in catalysis. The Mg(2+) site is built by E209 and E235. H285 (proton acceptor) is an active-site residue.

Belongs to the mandelate racemase/muconate lactonizing enzyme family. GalD subfamily. Requires Mg(2+) as cofactor.

It catalyses the reaction D-galactonate = 2-dehydro-3-deoxy-D-galactonate + H2O. Its pathway is carbohydrate acid metabolism; D-galactonate degradation; D-glyceraldehyde 3-phosphate and pyruvate from D-galactonate: step 1/3. In terms of biological role, catalyzes the dehydration of D-galactonate to 2-keto-3-deoxy-D-galactonate. The sequence is that of D-galactonate dehydratase from Escherichia coli O45:K1 (strain S88 / ExPEC).